A 202-amino-acid polypeptide reads, in one-letter code: MQSLYVEGNSRMHRLSPRAKLLSLTAFAILLFISHNLLLLSGAVLVAAVLYGTVGLPIGEALLRLRPIFLTIAVVALFNLIFNPWQAALVPVLRLTALMLLAASVTATTTITEFIDEVTALARPLERTGRVQADDIGLALGLVLRFVPEIVNRYQAIREAHKARGLKVRPTSLLAPLIILTLKDADNVAAAIDARRIRRHGS.

3 helical membrane passes run 21–40, 44–63, and 68–90; these read LLSL…LLLL, VLVA…EALL, and IFLT…AALV.

The protein belongs to the CbiQ family. In terms of assembly, part of a biotin transporter complex composed of BioM, BioN and BioY.

It localises to the cell inner membrane. Functionally, involved in biotin uptake. The polypeptide is Energy-coupling factor transporter transmembrane protein BioN (bioN) (Rhizobium etli (strain ATCC 51251 / DSM 11541 / JCM 21823 / NBRC 15573 / CFN 42)).